The primary structure comprises 187 residues: Ribosome-recycling factor (187 aa).

This sequence belongs to the RRF family.

The protein resides in the cytoplasm. In terms of biological role, responsible for the release of ribosomes from messenger RNA at the termination of protein biosynthesis. May increase the efficiency of translation by recycling ribosomes from one round of translation to another. This chain is Ribosome-recycling factor, found in Nitrosococcus oceani (strain ATCC 19707 / BCRC 17464 / JCM 30415 / NCIMB 11848 / C-107).